We begin with the raw amino-acid sequence, 215 residues long: MLQVYLVRHGETLWNAARRIQGQSDSPLTEIGIRQAHLVAQRVRNQGITHIISSDLGRTQQTAKIIADACGLTMVTDPRLRELNMGVLENRPIDSLTPEEEQWRKQMVNGTEGARIPEGESMTELGRRMHAALDSCLELPAGSKPLLVSHGMALGCLLSTLLGLPAHAERRLRLRNCSLSRVDYQESPWLASGWVIESAGDTAHLDMPALDELQR.

Residues 8 to 15 (RHGETLWN), 21 to 22 (QG), Arg58, 82 to 85 (ELNM), and 151 to 152 (GM) each bind substrate. His9 (tele-phosphohistidine intermediate) is an active-site residue. Glu82 serves as the catalytic Proton donor/acceptor.

It belongs to the phosphoglycerate mutase family. GpmB subfamily.

The catalysed reaction is (2R)-2-phosphoglycerate = (2R)-3-phosphoglycerate. It functions in the pathway carbohydrate degradation; glycolysis; pyruvate from D-glyceraldehyde 3-phosphate: step 3/5. The polypeptide is Probable phosphoglycerate mutase GpmB (Yersinia pseudotuberculosis serotype O:1b (strain IP 31758)).